A 212-amino-acid polypeptide reads, in one-letter code: Pyridoxine/pyridoxamine 5'-phosphate oxidase (212 aa).

Substrate is bound by residues 8–11 and Lys-66; that span reads RRNY. FMN is bound by residues 61 to 66, 76 to 77, Arg-82, Lys-83, and Gln-105; these read RIVLLK and FT. Substrate is bound by residues Tyr-123, Arg-127, and Ser-131. FMN contacts are provided by residues 140–141 and Trp-184; that span reads QS. 190-192 is a substrate binding site; that stretch reads RLH. FMN is bound at residue Arg-194.

The protein belongs to the pyridoxamine 5'-phosphate oxidase family. As to quaternary structure, homodimer. Requires FMN as cofactor.

It carries out the reaction pyridoxamine 5'-phosphate + O2 + H2O = pyridoxal 5'-phosphate + H2O2 + NH4(+). The enzyme catalyses pyridoxine 5'-phosphate + O2 = pyridoxal 5'-phosphate + H2O2. It functions in the pathway cofactor metabolism; pyridoxal 5'-phosphate salvage; pyridoxal 5'-phosphate from pyridoxamine 5'-phosphate: step 1/1. Its pathway is cofactor metabolism; pyridoxal 5'-phosphate salvage; pyridoxal 5'-phosphate from pyridoxine 5'-phosphate: step 1/1. Functionally, catalyzes the oxidation of either pyridoxine 5'-phosphate (PNP) or pyridoxamine 5'-phosphate (PMP) into pyridoxal 5'-phosphate (PLP). This Cupriavidus metallidurans (strain ATCC 43123 / DSM 2839 / NBRC 102507 / CH34) (Ralstonia metallidurans) protein is Pyridoxine/pyridoxamine 5'-phosphate oxidase.